The sequence spans 93 residues: Large ribosomal subunit protein uL23 (93 aa).

The protein belongs to the universal ribosomal protein uL23 family. Part of the 50S ribosomal subunit. Contacts protein L29, and trigger factor when it is bound to the ribosome.

Functionally, one of the early assembly proteins it binds 23S rRNA. One of the proteins that surrounds the polypeptide exit tunnel on the outside of the ribosome. Forms the main docking site for trigger factor binding to the ribosome. In Natranaerobius thermophilus (strain ATCC BAA-1301 / DSM 18059 / JW/NM-WN-LF), this protein is Large ribosomal subunit protein uL23.